A 74-amino-acid chain; its full sequence is uncharacterized protein (74 aa).

The first 25 residues, 1 to 25 (MMMTDLPENIRKTAVALLRLGEATA), serve as a signal peptide directing secretion.

This is an uncharacterized protein from Archaeoglobus fulgidus (strain ATCC 49558 / DSM 4304 / JCM 9628 / NBRC 100126 / VC-16).